A 324-amino-acid chain; its full sequence is Acetyl-coenzyme A carboxylase carboxyl transferase subunit alpha (324 aa).

The 255-residue stretch at 42–296 (RLSELEEEVY…EKALTRLAEK (255 aa)) folds into the CoA carboxyltransferase C-terminal domain.

The protein belongs to the AccA family. Acetyl-CoA carboxylase is a heterohexamer composed of biotin carboxyl carrier protein (AccB), biotin carboxylase (AccC) and two subunits each of ACCase subunit alpha (AccA) and ACCase subunit beta (AccD).

The protein localises to the cytoplasm. It carries out the reaction N(6)-carboxybiotinyl-L-lysyl-[protein] + acetyl-CoA = N(6)-biotinyl-L-lysyl-[protein] + malonyl-CoA. Its pathway is lipid metabolism; malonyl-CoA biosynthesis; malonyl-CoA from acetyl-CoA: step 1/1. Functionally, component of the acetyl coenzyme A carboxylase (ACC) complex. First, biotin carboxylase catalyzes the carboxylation of biotin on its carrier protein (BCCP) and then the CO(2) group is transferred by the carboxyltransferase to acetyl-CoA to form malonyl-CoA. The protein is Acetyl-coenzyme A carboxylase carboxyl transferase subunit alpha of Shouchella clausii (strain KSM-K16) (Alkalihalobacillus clausii).